We begin with the raw amino-acid sequence, 236 residues long: Large ribosomal subunit protein uL3 (236 aa).

The disordered stretch occupies residues proline 215–alanine 236. Residues alanine 221–alanine 236 are compositionally biased toward low complexity.

This sequence belongs to the universal ribosomal protein uL3 family. Part of the 50S ribosomal subunit. Forms a cluster with proteins L14 and L19.

Its function is as follows. One of the primary rRNA binding proteins, it binds directly near the 3'-end of the 23S rRNA, where it nucleates assembly of the 50S subunit. The chain is Large ribosomal subunit protein uL3 from Parafrankia sp. (strain EAN1pec).